The primary structure comprises 107 residues: MAHAKKQARRKLLTSTDDPILSSTFTMRPTSKIADAEIISREHDYIASKTQADSKKKLSSLSVIFDKTVLFEFYGIGDNNEKAIVYPIDPDFLLCDSENNCTLSPFL.

This is an uncharacterized protein from Homo sapiens (Human).